Consider the following 676-residue polypeptide: Hypermethylated in cancer 1 protein (676 aa).

A disordered region spans residues 1-27 (APGARPAASRERGHKSREERCGERGAA). Over residues 8 to 23 (ASRERGHKSREERCGE) the composition is skewed to basic and acidic residues. In terms of domain architecture, BTB spans 63–126 (CDVIIVVQNA…IYTGRLGECE (64 aa)). The binding to CtBP stretch occupies residues 241-245 (GLDLS). Disordered stretches follow at residues 264 to 326 (PAEP…LPRG) and 342 to 405 (GPYL…DRYC). Basic and acidic residues-rich tracts occupy residues 266 to 278 (EPRE…RHDS) and 351 to 361 (EKELEREEKAE). Residues 384-398 (STSEETGSSEGPSPG) show a composition bias toward low complexity. 5 C2H2-type zinc fingers span residues 420–447 (YVCI…EEEL), 474–501 (YRCS…LTRP), 502–529 (YPCT…GLKP), 530–557 (FACD…GEKP), and 558–585 (YECQ…AGPD).

It belongs to the krueppel C2H2-type zinc-finger protein family. Hic subfamily. In terms of assembly, interacts with CtBP. As to expression, isoform 1 is highly expressed in kidney and lung. Expression of isoform 2 is higher in the lens, retina and stomach, and extremely low in heart, muscle, kidney and lung. Isoform 3 is weakly expressed in heart, kidney and lens.

It localises to the nucleus. Its function is as follows. Binds specifically to the gamma F-1-binding motif of the gamma F-crystallin promoter. May have a regulatory role in sclerotome specification and/or differentiation. Isoform 2 functions as a transcriptional repressor in lens cells. This is Hypermethylated in cancer 1 protein (HIC1) from Gallus gallus (Chicken).